We begin with the raw amino-acid sequence, 542 residues long: Putative ankyrin repeat protein FPV115 (542 aa).

8 ANK repeats span residues Phe-33–Ser-62, Asp-157–Leu-186, Asn-218–Thr-247, Lys-251–Val-281, Glu-285–Val-314, Thr-316–Thr-345, Asp-347–Ser-375, and Cys-378–Ala-407.

This is Putative ankyrin repeat protein FPV115 from Fowlpox virus (strain NVSL) (FPV).